The sequence spans 263 residues: Tryptophan synthase alpha chain (263 aa).

Residues E46 and D57 each act as proton acceptor in the active site.

Belongs to the TrpA family. As to quaternary structure, tetramer of two alpha and two beta chains.

It catalyses the reaction (1S,2R)-1-C-(indol-3-yl)glycerol 3-phosphate + L-serine = D-glyceraldehyde 3-phosphate + L-tryptophan + H2O. It functions in the pathway amino-acid biosynthesis; L-tryptophan biosynthesis; L-tryptophan from chorismate: step 5/5. Its function is as follows. The alpha subunit is responsible for the aldol cleavage of indoleglycerol phosphate to indole and glyceraldehyde 3-phosphate. In Bacteroides fragilis (strain ATCC 25285 / DSM 2151 / CCUG 4856 / JCM 11019 / LMG 10263 / NCTC 9343 / Onslow / VPI 2553 / EN-2), this protein is Tryptophan synthase alpha chain.